The primary structure comprises 125 residues: Ribosome-binding factor A (125 aa).

The protein belongs to the RbfA family. Monomer. Binds 30S ribosomal subunits, but not 50S ribosomal subunits or 70S ribosomes.

Its subcellular location is the cytoplasm. Functionally, one of several proteins that assist in the late maturation steps of the functional core of the 30S ribosomal subunit. Associates with free 30S ribosomal subunits (but not with 30S subunits that are part of 70S ribosomes or polysomes). Required for efficient processing of 16S rRNA. May interact with the 5'-terminal helix region of 16S rRNA. The chain is Ribosome-binding factor A from Akkermansia muciniphila (strain ATCC BAA-835 / DSM 22959 / JCM 33894 / BCRC 81048 / CCUG 64013 / CIP 107961 / Muc).